Consider the following 157-residue polypeptide: Transcription elongation factor GreB (157 aa).

This sequence belongs to the GreA/GreB family. GreB subfamily.

Its function is as follows. Necessary for efficient RNA polymerase transcription elongation past template-encoded arresting sites. The arresting sites in DNA have the property of trapping a certain fraction of elongating RNA polymerases that pass through, resulting in locked ternary complexes. Cleavage of the nascent transcript by cleavage factors such as GreA or GreB allows the resumption of elongation from the new 3'terminus. GreB releases sequences of up to 9 nucleotides in length. This chain is Transcription elongation factor GreB, found in Salmonella typhi.